A 292-amino-acid chain; its full sequence is Ventral anterior homeobox 2 (292 aa).

Positions 1 to 36 (MGDGGAERDRGPKRREEPGGRSGCRGEHRGAEDLRA) are enriched in basic and acidic residues. The interval 1–74 (MGDGGAERDR…DGQQALGETD (74 aa)) is disordered. The segment covering 38–55 (TGSTSPREIAGTSASSPA) has biased composition (polar residues). Residues 102–161 (PKRTRTSFTAEQLYRLEMEFQRCQYVVGRERTELARQLNLSETQVKVWFQNRRTKQKKDQ) constitute a DNA-binding region (homeobox). Residues 212 to 241 (AGHRGTSLGDPRNSSQRLNPMPSASASSPL) are disordered.

Belongs to the EMX homeobox family.

The protein resides in the nucleus. Transcription factor that may function in dorsoventral specification of the forebrain. Regulates the expression of Wnt signaling antagonists including the expression of a truncated TCF7L2 isoform that cannot bind CTNNB1 and acts therefore as a potent dominant-negative Wnt antagonist. Plays a crucial role in eye development and, in particular, in the specification of the ventral optic vesicle. May be a regulator of axial polarization in the retina. This is Ventral anterior homeobox 2 (Vax2) from Rattus norvegicus (Rat).